The chain runs to 209 residues: FMN-dependent NADH:quinone oxidoreductase (209 aa).

FMN is bound by residues Ser10, 16–18 (SHS), and 98–101 (MWNF).

Belongs to the azoreductase type 1 family. Homodimer. FMN serves as cofactor.

The enzyme catalyses 2 a quinone + NADH + H(+) = 2 a 1,4-benzosemiquinone + NAD(+). It carries out the reaction N,N-dimethyl-1,4-phenylenediamine + anthranilate + 2 NAD(+) = 2-(4-dimethylaminophenyl)diazenylbenzoate + 2 NADH + 2 H(+). Functionally, quinone reductase that provides resistance to thiol-specific stress caused by electrophilic quinones. Also exhibits azoreductase activity. Catalyzes the reductive cleavage of the azo bond in aromatic azo compounds to the corresponding amines. The sequence is that of FMN-dependent NADH:quinone oxidoreductase from Nitratidesulfovibrio vulgaris (strain ATCC 29579 / DSM 644 / CCUG 34227 / NCIMB 8303 / VKM B-1760 / Hildenborough) (Desulfovibrio vulgaris).